A 245-amino-acid polypeptide reads, in one-letter code: 1-(5-phosphoribosyl)-5-[(5-phosphoribosylamino)methylideneamino] imidazole-4-carboxamide isomerase (245 aa).

D7 functions as the Proton acceptor in the catalytic mechanism. The Proton donor role is filled by D129.

The protein belongs to the HisA/HisF family.

The protein localises to the cytoplasm. It catalyses the reaction 1-(5-phospho-beta-D-ribosyl)-5-[(5-phospho-beta-D-ribosylamino)methylideneamino]imidazole-4-carboxamide = 5-[(5-phospho-1-deoxy-D-ribulos-1-ylimino)methylamino]-1-(5-phospho-beta-D-ribosyl)imidazole-4-carboxamide. Its pathway is amino-acid biosynthesis; L-histidine biosynthesis; L-histidine from 5-phospho-alpha-D-ribose 1-diphosphate: step 4/9. The sequence is that of 1-(5-phosphoribosyl)-5-[(5-phosphoribosylamino)methylideneamino] imidazole-4-carboxamide isomerase from Vibrio campbellii (strain ATCC BAA-1116).